We begin with the raw amino-acid sequence, 147 residues long: Hemoglobin subunit gamma (147 aa).

The Globin domain maps to 3-147; it reads NFTAEDKAAI…VASALASRYH (145 aa). Residues His-64 and His-93 each coordinate heme b.

This sequence belongs to the globin family. As to quaternary structure, heterotetramer of two alpha chains and two gamma chains in fetal hemoglobin (Hb F). As to expression, red blood cells.

In terms of biological role, gamma chains make up the fetal hemoglobin F, in combination with alpha chains. This Alouatta seniculus (Red howler monkey) protein is Hemoglobin subunit gamma (HBG).